We begin with the raw amino-acid sequence, 133 residues long: MSTTGKGGKAKGKTASSKQVSRSARAGLQFPVGRISRFLKNGRYSERIGTGAPVYLAAVLEYLAAEVLELAGNAAKDNKKTRIVPRHILLAIRNDEELNKLMANTTIADGGVLPNINPMLLPSKTKKTSEAEH.

Residues 1-23 (MSTTGKGGKAKGKTASSKQVSRS) form a disordered region. Ser2 bears the N-acetylserine mark. N6-acetyllysine is present on residues Lys6, Lys9, Lys11, Lys13, and Lys18. At Ser123 the chain carries Phosphoserine. Lys124 is covalently cross-linked (Glycyl lysine isopeptide (Lys-Gly) (interchain with G-Cter in ubiquitin)). Ser129 carries the post-translational modification Phosphoserine.

The protein belongs to the histone H2A family. In terms of assembly, the nucleosome is a histone octamer containing two molecules each of H2A, H2B, H3 and H4 assembled in one H3-H4 heterotetramer and two H2A-H2B heterodimers. The octamer wraps approximately 147 bp of DNA. Monoubiquitination of Lys-124 gives a specific tag for epigenetic transcriptional repression. In terms of processing, acetylation occurs almost exclusively in the MAC.

Its subcellular location is the nucleus. It is found in the chromosome. Its function is as follows. Core component of nucleosome. Nucleosomes wrap and compact DNA into chromatin, limiting DNA accessibility to the cellular machineries which require DNA as a template. Histones thereby play a central role in transcription regulation, DNA repair, DNA replication and chromosomal stability. DNA accessibility is regulated via a complex set of post-translational modifications of histones, also called histone code, and nucleosome remodeling. This is Histone H2A.1 (HTA2) from Tetrahymena pyriformis.